The sequence spans 569 residues: Sugar transporter STL1 (569 aa).

At 1-29 (MKDLKLSNFKGKFISRTSHWGLTGKKLRY) the chain is on the cytoplasmic side. The chain crosses the membrane as a helical span at residues 30–50 (FITIASMTGFSLFGYDQGLMA). The Extracellular portion of the chain corresponds to 51 to 79 (SLITGKQFNYEFPATKENGDHDRHATVVQ). A helical transmembrane segment spans residues 80–100 (GATTSCYELGCFAGSLFVMFC). The Cytoplasmic portion of the chain corresponds to 101 to 107 (GERIGRK). The helical transmembrane segment at 108 to 128 (PLILMGSVITIIGAVISTCAF) threads the bilayer. Residue Arg-129 is a topological domain, extracellular. Residues 130–150 (GYWALGQFIIGRVVTGVGTGL) form a helical membrane-spanning segment. Residues 151-168 (NTSTIPVWQSEMSKAENR) are Cytoplasmic-facing. The chain crosses the membrane as a helical span at residues 169–189 (GLLVNLEGSTIAFGTMIAYWI). The Extracellular segment spans residues 190–203 (DFGLSYTNSSVQWR). Residue Asn-197 is glycosylated (N-linked (GlcNAc...) asparagine). The helical transmembrane segment at 204-224 (FPVSMQIVFALFLLAFMIKLP) threads the bilayer. Residues 225–291 (ESPRWLISQS…SRGRSQNLQR (67 aa)) are Cytoplasmic-facing. Residues 292-312 (ALIAASTQFFQQFTGCNAAIY) form a helical membrane-spanning segment. Residues 313-330 (YSTVLFNKTIKLDYRLSM) are Extracellular-facing. Asn-319 carries N-linked (GlcNAc...) asparagine glycosylation. Residues 331-351 (IIGGVFATIYALSTIGSFFLI) traverse the membrane as a helical segment. At 352 to 358 (EKLGRRK) the chain is on the cytoplasmic side. A helical membrane pass occupies residues 359 to 379 (LFLLGATGQAVSFTITFACLV). The Extracellular portion of the chain corresponds to 380–389 (KENKENARGA). A helical transmembrane segment spans residues 390 to 410 (AVGLFLFITFFGLSLLSLPWI). Residues 411–426 (YPPEIASMKVRASTNA) lie on the Cytoplasmic side of the membrane. Residues 427–447 (FSTCTNWLCNFAVVMFTPIFI) traverse the membrane as a helical segment. The Extracellular segment spans residues 448–453 (GQSGWG). The chain crosses the membrane as a helical span at residues 454-474 (CYLFFAVMNYLYIPVIFFFYP). Topologically, residues 475–569 (ETAGRSLEEI…TVNDKANFEG (95 aa)) are cytoplasmic. The segment covering 524-533 (DDEMEKEDFG) has biased composition (acidic residues). The segment at 524–569 (DDEMEKEDFGEDRVEDTYNQINGDNSSSSSNIKNEDTVNDKANFEG) is disordered. The segment covering 556 to 569 (KNEDTVNDKANFEG) has biased composition (basic and acidic residues).

This sequence belongs to the major facilitator superfamily. Sugar transporter (TC 2.A.1.1) family.

The protein resides in the membrane. The protein is Sugar transporter STL1 (STL1) of Saccharomyces cerevisiae (strain ATCC 204508 / S288c) (Baker's yeast).